The sequence spans 520 residues: 2-isopropylmalate synthase (520 aa).

In terms of domain architecture, Pyruvate carboxyltransferase spans 5–267; it reads VIIFDTTLRD…YTNINHQEIY (263 aa). Mn(2+)-binding residues include aspartate 14, histidine 202, histidine 204, and asparagine 238. A regulatory domain region spans residues 392–520; that stretch reads HLDNFNIQSG…RIQQNTKEMV (129 aa).

It belongs to the alpha-IPM synthase/homocitrate synthase family. LeuA type 1 subfamily. In terms of assembly, homodimer. Mn(2+) serves as cofactor.

Its subcellular location is the cytoplasm. The enzyme catalyses 3-methyl-2-oxobutanoate + acetyl-CoA + H2O = (2S)-2-isopropylmalate + CoA + H(+). Its pathway is amino-acid biosynthesis; L-leucine biosynthesis; L-leucine from 3-methyl-2-oxobutanoate: step 1/4. Catalyzes the condensation of the acetyl group of acetyl-CoA with 3-methyl-2-oxobutanoate (2-ketoisovalerate) to form 3-carboxy-3-hydroxy-4-methylpentanoate (2-isopropylmalate). The protein is 2-isopropylmalate synthase of Photorhabdus laumondii subsp. laumondii (strain DSM 15139 / CIP 105565 / TT01) (Photorhabdus luminescens subsp. laumondii).